We begin with the raw amino-acid sequence, 289 residues long: Inorganic pyrophosphatase (289 aa).

N-acetylserine is present on Ser2. Lys57 carries the post-translational modification N6-acetyllysine. 3 residues coordinate Mg(2+): Asp116, Asp121, and Asp153. Residue Lys228 is modified to N6-acetyllysine. Phosphoserine is present on Ser250.

It belongs to the PPase family. As to quaternary structure, homodimer. The cofactor is Mg(2+).

The protein localises to the cytoplasm. The catalysed reaction is diphosphate + H2O = 2 phosphate + H(+). The sequence is that of Inorganic pyrophosphatase (PPA1) from Macaca fascicularis (Crab-eating macaque).